A 498-amino-acid chain; its full sequence is ADP,ATP carrier protein 1 (498 aa).

Residues 1–33 (MSTSKSENYLSELRKIIWPIEQYENKKFLPLAF) lie on the Cytoplasmic side of the membrane. Residues 34-54 (MMFCILLNYSTLRSIKDGFVV) traverse the membrane as a helical segment. A disulfide bridge connects residues cysteine 37 and cysteine 85. At 55–67 (TDIGTESISFLKT) the chain is on the extracellular side. Residues 68-88 (YIVLPSAVIAMIIYVKLCDIL) form a helical membrane-spanning segment. At 89 to 92 (KQEN) the chain is on the cytoplasmic side. A helical transmembrane segment spans residues 93-113 (VFYVITSFFLGYFALFAFVLY). Topologically, residues 114–147 (PYPDLVHPDHKTIESLSLAYPNFKWFIKIVGKWS) are extracellular. The chain crosses the membrane as a helical span at residues 148 to 168 (FASFYTIAELWGTMMLSLLFW). The Cytoplasmic portion of the chain corresponds to 169–184 (QFANQITKIAEAKRFY). A helical transmembrane segment spans residues 185 to 205 (SMFGLLANLALPVTSVVIGYF). Residues 206-218 (LHEKTQIVAEHLK) are Extracellular-facing. The chain crosses the membrane as a helical span at residues 219-239 (FVPLFVIMITSSFLIILTYRW). Residues 240–279 (MNKNVLTDPRLYDPALVKEKKTKAKLSFIESLKMIFTSKY) lie on the Cytoplasmic side of the membrane. Residues 280-300 (VGYIALLIIAYGVSVNLVEGV) traverse the membrane as a helical segment. Residues 301–320 (WKSKVKELYPTKEAYTIYMG) lie on the Extracellular side of the membrane. A helical membrane pass occupies residues 321–341 (QFQFYQGWVAIAFMLIGSNIL). The Cytoplasmic segment spans residues 342-348 (RKVSWLT). The helical transmembrane segment at 349 to 369 (AAMITPLMMFITGAAFFSFIF) threads the bilayer. At 370 to 379 (FDSVIAMNLT) the chain is on the extracellular side. The helical transmembrane segment at 380–400 (GILASSPLTLAVMIGMIQNVL) threads the bilayer. The Cytoplasmic portion of the chain corresponds to 401–438 (SKGVKYSLFDATKNMAYIPLDKDLRVKGQAAVEVIGGR). 436–442 (GGRLGKS) is a binding site for ATP. A helical transmembrane segment spans residues 439 to 459 (LGKSGGAIIQSTFFILFPVFG). At 460 to 465 (FIEATP) the chain is on the extracellular side. The chain crosses the membrane as a helical span at residues 466–486 (YFASIFFIIVILWIFAVKGLN). Residues 487–498 (KEYQVLVNKNEK) lie on the Cytoplasmic side of the membrane.

This sequence belongs to the ADP/ATP translocase tlc family.

It is found in the cell membrane. Functionally, provides the rickettsial cell with host ATP in exchange for rickettsial ADP. This is an obligate exchange system. This energy acquiring activity is an important component of rickettsial parasitism. This chain is ADP,ATP carrier protein 1 (tlcA), found in Rickettsia prowazekii (strain Madrid E).